Consider the following 430-residue polypeptide: Probable glucose-6-phosphate isomerase (430 aa).

Catalysis depends on glutamate 271, which acts as the Proton donor. Residues histidine 292, histidine 303, and lysine 403 contribute to the active site.

The protein belongs to the GPI family.

The protein resides in the cytoplasm. The catalysed reaction is alpha-D-glucose 6-phosphate = beta-D-fructose 6-phosphate. It participates in carbohydrate biosynthesis; gluconeogenesis. The protein operates within carbohydrate degradation; glycolysis; D-glyceraldehyde 3-phosphate and glycerone phosphate from D-glucose: step 2/4. Functionally, catalyzes the reversible isomerization of glucose-6-phosphate to fructose-6-phosphate. In Haloquadratum walsbyi (strain DSM 16790 / HBSQ001), this protein is Probable glucose-6-phosphate isomerase.